The following is a 414-amino-acid chain: Probable protein phosphatase 2C 9 (414 aa).

Residues 15–37 (TATAAVAAAVSASAAAAVSSAID) traverse the membrane as a helical segment. The disordered stretch occupies residues 56–95 (LQAGEDGRPGKRQRLARTASGAPRPDEDSASERPSCGRTE). Residues 99 to 410 (RYGVTAVCGR…DNVSVVVVDL (312 aa)) form the PPM-type phosphatase domain. Mn(2+) is bound by residues aspartate 136 and glycine 137. Residues 186 to 195 (GNRASTRSDD) are compositionally biased toward basic and acidic residues. The tract at residues 186 to 212 (GNRASTRSDDEPACPCEQQTPSRRDHA) is disordered. Aspartate 319 provides a ligand contact to Mn(2+). The segment at 345–372 (APAARPSGVPSSAEAAETENGGAASVKG) is disordered. The span at 355–369 (SSAEAAETENGGAAS) shows a compositional bias: low complexity. Aspartate 401 lines the Mn(2+) pocket.

This sequence belongs to the PP2C family. The cofactor is Mg(2+). Mn(2+) is required as a cofactor.

The protein localises to the membrane. The enzyme catalyses O-phospho-L-seryl-[protein] + H2O = L-seryl-[protein] + phosphate. The catalysed reaction is O-phospho-L-threonyl-[protein] + H2O = L-threonyl-[protein] + phosphate. The chain is Probable protein phosphatase 2C 9 from Oryza sativa subsp. japonica (Rice).